The sequence spans 307 residues: Mitochondrial brown fat uncoupling protein 1 (307 aa).

The Mitochondrial intermembrane segment spans residues 1-10 (MVSLTTSEVH). Residues 11–32 (PTMGVKTFSAGISACLADIITF) form a helical membrane-spanning segment. Solcar repeat units follow at residues 11 to 102 (PTMG…VQEY), 111 to 201 (PTLG…MKGA), and 210 to 295 (DDVP…LKKE). Residues 33 to 73 (PLDTAKVRLQIQGEGQTSSTIRYKGVLGTITTLAKTEGWPK) lie on the Mitochondrial matrix side of the membrane. Residue K56 coordinates fatty acid 16:0. Residues 74–96 (LYSGLPAGIQRQISFASLRIGLY) form a helical membrane-spanning segment. Topologically, residues 97–116 (DTVQEYFSSGKETPPTLGNR) are mitochondrial intermembrane. Residues 117 to 133 (ISAGLMTGGVAVFIGQP) form a helical membrane-spanning segment. At 134 to 178 (TEVVKVRLQAQSHLHGIKPRYTGTYNAYRIIATTESFSTLWKGTT) the chain is on the mitochondrial matrix side. Residues 179 to 195 (PNLMRNVIINRTELVTY) form a helical membrane-spanning segment. The Mitochondrial intermembrane portion of the chain corresponds to 196-212 (DLMKGALVNNQILADDV). A helical membrane pass occupies residues 213 to 232 (PCHLLSALVAGFCTTFLASP). The Mitochondrial matrix portion of the chain corresponds to 233–266 (ADVVKTRFINSLPGQYPSVPSCAMTMLTKEGPTA). Residue C254 is modified to Cysteine sulfenic acid (-SOH). A helical transmembrane segment spans residues 267-289 (FFKGFVPSFLRLASWNVIMFVCF). Fatty acid 16:0 is bound at residue K269. Topologically, residues 290–307 (EQLKKELMKSRQTMDCTT) are mitochondrial intermembrane.

The protein belongs to the mitochondrial carrier (TC 2.A.29) family. Most probably functions as a monomer. Binds one purine nucleotide per monomer. However, has also been suggested to function as a homodimer or a homotetramer. Tightly associates with cardiolipin in the mitochondrion inner membrane; may stabilize and regulate its activity. In terms of processing, may undergo sulfenylation upon cold exposure. May increase the sensitivity of UCP1 thermogenic function to the activation by noradrenaline probably through structural effects. May undergo ubiquitin-mediated proteasomal degradation.

Its subcellular location is the mitochondrion inner membrane. It catalyses the reaction H(+)(in) = H(+)(out). Has no constitutive proton transporter activity and has to be activated by long-chain fatty acids/LCFAs. Inhibited by purine nucleotides. Both purine nucleotides and LCFAs bind the cytosolic side of the transporter and directly compete to activate or inhibit it. Activated by noradrenaline and reactive oxygen species. Despite lacking canonical translational encoding for selenocysteine, a small pool of the protein has been observed to selectively incorporate selenocysteine at 'Cys-254'. Selenocysteine-modified protein is highly sensitive to redox modification and may constitute a pool of protein highly sensitive to activation by elevated levels of reactive oxygen species (ROS). Its function is as follows. Mitochondrial protein responsible for thermogenic respiration, a specialized capacity of brown adipose tissue and beige fat that participates in non-shivering adaptive thermogenesis to temperature and diet variations and more generally to the regulation of energy balance. Functions as a long-chain fatty acid/LCFA and proton symporter, simultaneously transporting one LCFA and one proton through the inner mitochondrial membrane. However, LCFAs remaining associated with the transporter via their hydrophobic tails, it results in an apparent transport of protons activated by LCFAs. Thereby, dissipates the mitochondrial proton gradient and converts the energy of substrate oxydation into heat instead of ATP. Regulates the production of reactive oxygen species/ROS by mitochondria. This is Mitochondrial brown fat uncoupling protein 1 from Dicrostonyx groenlandicus (Northern collared lemming).